A 482-amino-acid chain; its full sequence is Glutamyl-tRNA(Gln) amidotransferase subunit A (482 aa).

Active-site charge relay system residues include K75 and S150. S174 serves as the catalytic Acyl-ester intermediate.

The protein belongs to the amidase family. GatA subfamily. As to quaternary structure, heterotrimer of A, B and C subunits.

The catalysed reaction is L-glutamyl-tRNA(Gln) + L-glutamine + ATP + H2O = L-glutaminyl-tRNA(Gln) + L-glutamate + ADP + phosphate + H(+). Its function is as follows. Allows the formation of correctly charged Gln-tRNA(Gln) through the transamidation of misacylated Glu-tRNA(Gln) in organisms which lack glutaminyl-tRNA synthetase. The reaction takes place in the presence of glutamine and ATP through an activated gamma-phospho-Glu-tRNA(Gln). This chain is Glutamyl-tRNA(Gln) amidotransferase subunit A, found in Deinococcus radiodurans (strain ATCC 13939 / DSM 20539 / JCM 16871 / CCUG 27074 / LMG 4051 / NBRC 15346 / NCIMB 9279 / VKM B-1422 / R1).